The following is a 371-amino-acid chain: Zinc finger CCCH domain-containing protein 21 (371 aa).

Positions 1 to 64 (MPPKQQPKAD…AAKKKKEEEK (64 aa)) are disordered. Over residues 10 to 23 (DLAKKQKQVEDKTF) the composition is skewed to basic and acidic residues. A compositionally biased stretch (polar residues) spans 34–46 (VQKYVQSLKQSVQ). 2 C3H1-type zinc fingers span residues 88–115 (DPKS…HDLN) and 159–197 (KPTD…HALP). 2 coiled-coil regions span residues 205–237 (QMKA…ATQM) and 283–317 (FVDD…GTSK). A disordered region spans residues 290–371 (CEEYEREREQ…IREPNDEGSS (82 aa)). The segment covering 292 to 312 (EYEREREQEETEQKAKNKEAE) has biased composition (basic and acidic residues). Acidic residues predominate over residues 330-352 (NEEEEDDDDDDDDLDMDELDELE).

In Arabidopsis thaliana (Mouse-ear cress), this protein is Zinc finger CCCH domain-containing protein 21.